The chain runs to 1054 residues: Bifunctional glutamine synthetase adenylyltransferase/adenylyl-removing enzyme (1054 aa).

Residues 1 to 535 (MRKTLPSIGA…LHRKLFYRPL (535 aa)) are adenylyl removase. Polar residues-rich tracts occupy residues 138 to 150 (SFSSESQQPQGSD) and 165 to 175 (DTANTDLSTPG). Residues 138–175 (SFSSESQQPQGSDSDSEFSFGADLSADDTANTDLSTPG) form a disordered region. The interval 541–1054 (NISVGTLKLS…WGVDSIEHDY (514 aa)) is adenylyl transferase.

This sequence belongs to the GlnE family. It depends on Mg(2+) as a cofactor.

The catalysed reaction is [glutamine synthetase]-O(4)-(5'-adenylyl)-L-tyrosine + phosphate = [glutamine synthetase]-L-tyrosine + ADP. It catalyses the reaction [glutamine synthetase]-L-tyrosine + ATP = [glutamine synthetase]-O(4)-(5'-adenylyl)-L-tyrosine + diphosphate. Its function is as follows. Involved in the regulation of glutamine synthetase GlnA, a key enzyme in the process to assimilate ammonia. When cellular nitrogen levels are high, the C-terminal adenylyl transferase (AT) inactivates GlnA by covalent transfer of an adenylyl group from ATP to specific tyrosine residue of GlnA, thus reducing its activity. Conversely, when nitrogen levels are low, the N-terminal adenylyl removase (AR) activates GlnA by removing the adenylyl group by phosphorolysis, increasing its activity. The regulatory region of GlnE binds the signal transduction protein PII (GlnB) which indicates the nitrogen status of the cell. The sequence is that of Bifunctional glutamine synthetase adenylyltransferase/adenylyl-removing enzyme from Corynebacterium diphtheriae (strain ATCC 700971 / NCTC 13129 / Biotype gravis).